A 92-amino-acid chain; its full sequence is Small ribosomal subunit protein uS19c (92 aa).

This sequence belongs to the universal ribosomal protein uS19 family.

It is found in the plastid. Its subcellular location is the chloroplast. Protein S19 forms a complex with S13 that binds strongly to the 16S ribosomal RNA. This Gracilaria tenuistipitata var. liui (Red alga) protein is Small ribosomal subunit protein uS19c.